The sequence spans 743 residues: DEAD-box ATP-dependent RNA helicase 3B, chloroplastic (743 aa).

Residues 1–37 (MASLTLPALALALSNPGAVRLRAAAFRCWALRRRGWA) constitute a chloroplast transit peptide. The segment at 60 to 79 (GSDDEDGEGPYGSDADEGFE) is disordered. The segment covering 61–79 (SDDEDGEGPYGSDADEGFE) has biased composition (acidic residues). The Q motif motif lies at 88-116 (LAIARLGLPDELVATLEKRGITHLFPIQR). Positions 119 to 295 (LIPALEGRDL…RRYLNNPLTI (177 aa)) constitute a Helicase ATP-binding domain. 132 to 139 (AKTGTGKT) contacts ATP. The DEAD box signature appears at 243–246 (DEAD). Residues 324 to 469 (VLSDLITVYA…ISPPSIEEVL (146 aa)) enclose the Helicase C-terminal domain. The segment at 606–719 (LTKISKLPAL…RSSSFGGRES (114 aa)) is disordered. Over residues 642-653 (GGGASRGRGGWD) the composition is skewed to gly residues. Residues 657 to 671 (EDRFRRGGRSLRSDN) show a composition bias toward basic and acidic residues. A compositionally biased stretch (low complexity) spans 688–719 (RSSSFGSRSSSYSSRGSPSFGGRSSSFGGRES). The CCHC-type zinc-finger motif lies at 725–742 (GACFNCGESGHRATDCPN).

The protein belongs to the DEAD box helicase family. DDX21/DDX50 subfamily.

The protein resides in the plastid. It is found in the chloroplast stroma. The catalysed reaction is ATP + H2O = ADP + phosphate + H(+). Functionally, nuclear genome-encoded factor involved in ribosome biogenesis in chloroplasts. Binds specific group II introns in chloroplasts and facilitates their splicing. Is required for rRNA maturation in plastids and may contribute to the assembly of the large (50S) ribosomal subunit. Required for normal development of chloroplasts. The polypeptide is DEAD-box ATP-dependent RNA helicase 3B, chloroplastic (Zea mays (Maize)).